The chain runs to 292 residues: Formamidopyrimidine-DNA glycosylase (292 aa).

Pro-2 functions as the Schiff-base intermediate with DNA in the catalytic mechanism. Catalysis depends on Glu-3, which acts as the Proton donor. Lys-58 (proton donor; for beta-elimination activity) is an active-site residue. Residues His-98, Arg-128, and Arg-173 each contribute to the DNA site. The FPG-type zinc-finger motif lies at 258-292; that stretch reads LVYDRAGQPCRVCATPVRQIVQGQRSTFYCPNCQH. Arg-282 serves as the catalytic Proton donor; for delta-elimination activity.

It belongs to the FPG family. Monomer. Zn(2+) is required as a cofactor.

The enzyme catalyses Hydrolysis of DNA containing ring-opened 7-methylguanine residues, releasing 2,6-diamino-4-hydroxy-5-(N-methyl)formamidopyrimidine.. The catalysed reaction is 2'-deoxyribonucleotide-(2'-deoxyribose 5'-phosphate)-2'-deoxyribonucleotide-DNA = a 3'-end 2'-deoxyribonucleotide-(2,3-dehydro-2,3-deoxyribose 5'-phosphate)-DNA + a 5'-end 5'-phospho-2'-deoxyribonucleoside-DNA + H(+). Functionally, involved in base excision repair of DNA damaged by oxidation or by mutagenic agents. Acts as a DNA glycosylase that recognizes and removes damaged bases. Has a preference for oxidized purines, such as 7,8-dihydro-8-oxoguanine (8-oxoG). Has AP (apurinic/apyrimidinic) lyase activity and introduces nicks in the DNA strand. Cleaves the DNA backbone by beta-delta elimination to generate a single-strand break at the site of the removed base with both 3'- and 5'-phosphates. The sequence is that of Formamidopyrimidine-DNA glycosylase from Cupriavidus necator (strain ATCC 17699 / DSM 428 / KCTC 22496 / NCIMB 10442 / H16 / Stanier 337) (Ralstonia eutropha).